Here is a 411-residue protein sequence, read N- to C-terminus: MDSITLNAFDVSSAYTGEFVYDLDLNLFNKMLGGDPAPKPTTQPEERPTGRPIPVPRRRVRPRPAEDQLEEPLEELVKDPIGGPRGEQVEEPVEEPVEPEHPRRIPIPRNRSTRHRFLSADSSPPSHDGAVFDFRDRPTVFQKRGRPVRDMGPVRVSYDISTDVDRLMHNLQSMVKESRAVKVSEKDVDSCHEACERKYVGALMTVSSALRTLMVMVPDIKRIDHPQIKLLVNASRNDFVNVCLTESQKQRSLGVTNVYIDGTDQPLTVNLGLDRNDRLKSTLYKMAQLWKYETKMWERFSAAAKGGYDMKDLIEARRLRVERPFEQTSQLVDYLLDSIDDLTITGVERAKLSDWFTLISRYLKLDHQLLVNELTEGYILKEENKVLKERLDSLQVQVRKLQNRDLLDKWK.

The interval 32 to 108 (LGGDPAPKPT…PEHPRRIPIP (77 aa)) is disordered.

This is an uncharacterized protein from Ictalurid herpesvirus 1 (strain Auburn) (IcHV-1).